Consider the following 565-residue polypeptide: uncharacterized protein (565 aa).

A run of 10 helical transmembrane segments spans residues 28-48, 73-93, 109-129, 169-189, 262-282, 315-335, 364-384, 393-413, 461-481, and 526-546; these read IFHFYIYCILLGAVLLFLPFA, ASYGFLDALFLAVSAFSDTGL, VLAILLQLGGIGFVVIAFLVW, LFLFMVELLYGFLYTILFYFI, IVIQWLAISQIIFGGIGYPVL, LIVTAWCFLMLLMVEFIVITS, SLIFGPIPAASRVMQLWFGVI, VFPWSAESDIIKGIMVIAMFI, AFLVAVFGLVSVVLIAILLPL, and TLGLLMIMGQVGVSSSVLTFV.

The protein belongs to the TrkH potassium transport family.

It localises to the cell membrane. This is an uncharacterized protein from Mycoplasma pneumoniae (strain ATCC 29342 / M129 / Subtype 1) (Mycoplasmoides pneumoniae).